The chain runs to 683 residues: Eukaryotic translation initiation factor 3 subunit B (683 aa).

The interval 1–25 (MAKKKGEEQDFEEEPNFDDPEGFVD) is disordered. The segment covering 9–25 (QDFEEEPNFDDPEGFVD) has biased composition (acidic residues). The region spanning 49 to 133 (NVIVVDNIPV…YTLLVNRFAD (85 aa)) is the RRM domain. 6 WD repeats span residues 199–238 (KRER…KVNK), 240–279 (AHSN…EKRT), 283–321 (DGMS…LLDM), 324–359 (IRVE…TLMA), 435–477 (EVKE…EPVL), and 522–567 (GDHY…KRVN). Residues 611-638 (MTRASKELIEKRAKLREQFTEYRSKRVK) adopt a coiled-coil conformation.

It belongs to the eIF-3 subunit B family. In terms of assembly, component of the eukaryotic translation initiation factor 3 (eIF-3) complex.

It localises to the cytoplasm. Functionally, RNA-binding component of the eukaryotic translation initiation factor 3 (eIF-3) complex, which is involved in protein synthesis of a specialized repertoire of mRNAs and, together with other initiation factors, stimulates binding of mRNA and methionyl-tRNAi to the 40S ribosome. The eIF-3 complex specifically targets and initiates translation of a subset of mRNAs involved in cell proliferation. This chain is Eukaryotic translation initiation factor 3 subunit B, found in Anopheles gambiae (African malaria mosquito).